A 1006-amino-acid polypeptide reads, in one-letter code: Transmembrane channel-like protein 5 (1006 aa).

The tract at residues 1–289 is disordered; that stretch reads MSAYYRNNWS…DDPVGSLWGE (289 aa). The Extracellular segment spans residues 1–458; it reads MSAYYRNNWS…YFNFLRWLLK (458 aa). Polar residues-rich tracts occupy residues 20-30, 50-59, and 76-101; these read SGSQNRTQGYL, TRSNPYSVAS, and RSLS…SPDH. Positions 138–149 are enriched in low complexity; sequence AGSSSSGNYAGS. Basic and acidic residues predominate over residues 239-250; sequence REPDYSDAENGH. A helical transmembrane segment spans residues 459–479; it reads FNIFSFILNFSFIIIPQFTVA. Residues 480 to 485 are Cytoplasmic-facing; it reads KKNTLQ. Residues 486 to 508 traverse the membrane as a helical segment; that stretch reads FTGLEFFTGVGYFRDTVMYYGFY. Topologically, residues 509–525 are extracellular; sequence TNSTIQHGNSGASYNMQ. A helical membrane pass occupies residues 526–546; the sequence is LAYIFTIGACLTTCFFSLLFS. Over 547–619 the chain is Cytoplasmic; sequence MAKYFRNNFI…NQLLTRFSAY (73 aa). Residues 620–640 traverse the membrane as a helical segment; it reads MVAWVVSTGVAIACCAAVYYL. The Extracellular portion of the chain corresponds to 641–654; that stretch reads AEYNLEFLKTHSNP. Residues 655 to 675 form a helical membrane-spanning segment; that stretch reads GAVLLLPFVVSCINLAVPCIY. At 676 to 698 the chain is on the cytoplasmic side; the sequence is SMFRLVERYEMPRHEVYVLLIRN. The helical transmembrane segment at 699 to 719 threads the bilayer; that stretch reads IFLKISIIGILCYYWLNTVAL. Residues 720–732 are Extracellular-facing; that stretch reads SGEECWETLIGQD. A helical transmembrane segment spans residues 733–753; the sequence is IYRLLLMDFVFSLVNSFLGEF. At 754–786 the chain is on the cytoplasmic side; that stretch reads LRRIIGMQLITSLGLQEFDIARNVLELIYAQTL. The chain crosses the membrane as a helical span at residues 787-807; the sequence is VWIGIFFCPLLPFIQMIMLFI. At 808 to 835 the chain is on the extracellular side; it reads MFYSKNISLMMNFQPPSKAWRASQMMTF. Residues 836 to 856 form a helical membrane-spanning segment; sequence FIFLLFFPSFTGVLCTLAITI. The Cytoplasmic segment spans residues 857 to 900; the sequence is WRLKPSADCGPFRGLPLFIHSIYSWIDTLSTRPGYLWVVWIYRN. Residues 901–921 traverse the membrane as a helical segment; the sequence is LIGSVHFFFILTLIVLIITYL. Over 922 to 1006 the chain is Extracellular; sequence YWQITEGRKI…RSVQEGNPRA (85 aa).

Belongs to the TMC family.

Its subcellular location is the membrane. Its function is as follows. Probable component of an ion channel. Molecular function hasn't been characterized yet. This chain is Transmembrane channel-like protein 5, found in Homo sapiens (Human).